Reading from the N-terminus, the 158-residue chain is Transcription factor BTF3 homolog 4 (158 aa).

The 66-residue stretch at 33–98 (TADDKKLQSS…AEAKPITEML (66 aa)) folds into the NAC-A/B domain. A disordered region spans residues 124-158 (VLDSKAPKSEDIDEEDDDVPDLAENFDEASKNEAN). Residues 134–150 (DIDEEDDDVPDLAENFD) show a composition bias toward acidic residues.

This sequence belongs to the NAC-beta family.

The chain is Transcription factor BTF3 homolog 4 (BTF3L4) from Gallus gallus (Chicken).